The following is a 202-amino-acid chain: Endothelin-1 (202 aa).

Positions 1-25 (MDYFPVIFSLLFVTFQGAPETAVLG) are cleaved as a signal peptide. A propeptide spanning residues 26 to 50 (AELSTGAENGVQSPPPSTPWRPRRS) is cleaved from the precursor. Intrachain disulfides connect Cys-53–Cys-67 and Cys-55–Cys-63. A propeptide spanning residues 74–202 (VNTPERVVPY…DQKLTHNRAH (129 aa)) is cleaved from the precursor. An endothelin-like region spans residues 110–124 (CQCAHQKDKKCWNFC).

Belongs to the endothelin/sarafotoxin family. In terms of tissue distribution, highest expression in the adult is in lung. Lower levels found in heart, kidney, brain and intestine. In the embryo, expressed in outer and inner pharyngeal arch surfaces. Also expressed in endothelium of dorsal aorta and arch arteries, and in epithelium of pharyngeal pouches.

Its subcellular location is the secreted. Functionally, endothelins are endothelium-derived vasoconstrictor peptides. Probable ligand for G-protein coupled receptors EDNRA and EDNRB which activates PTK2B, BCAR1, BCAR3 and, GTPases RAP1 and RHOA cascade in glomerular mesangial cells. Also binds the DEAR/FBXW7-AS1 receptor. Promotes mesenteric arterial wall remodeling via activation of ROCK signaling and subsequent colocalization of NFATC3 with F-actin filaments. NFATC3 then translocates to the nucleus where it subsequently promotes the transcription of the smooth muscle hypertrophy and differentiation marker ACTA2. The chain is Endothelin-1 (Edn1) from Mus musculus (Mouse).